The sequence spans 123 residues: MTIRTERVGNAIRKEVASMLTRGEIKDPRLGGFVNIQEVRVSPDLSYAKVYYTVFGESDQAGVADAWQRASGFLRNVIAKRLKLRHAPELRFELDHVADYSKRIDELLNGLEIPPADDSDETH.

It belongs to the RbfA family. Monomer. Binds 30S ribosomal subunits, but not 50S ribosomal subunits or 70S ribosomes.

It is found in the cytoplasm. In terms of biological role, one of several proteins that assist in the late maturation steps of the functional core of the 30S ribosomal subunit. Associates with free 30S ribosomal subunits (but not with 30S subunits that are part of 70S ribosomes or polysomes). Required for efficient processing of 16S rRNA. May interact with the 5'-terminal helix region of 16S rRNA. This chain is Ribosome-binding factor A, found in Magnetococcus marinus (strain ATCC BAA-1437 / JCM 17883 / MC-1).